Reading from the N-terminus, the 314-residue chain is Tetraacyldisaccharide 4'-kinase (314 aa).

61-68 (IVGGSGKT) is a binding site for ATP.

The protein belongs to the LpxK family.

It catalyses the reaction a lipid A disaccharide + ATP = a lipid IVA + ADP + H(+). The protein operates within glycolipid biosynthesis; lipid IV(A) biosynthesis; lipid IV(A) from (3R)-3-hydroxytetradecanoyl-[acyl-carrier-protein] and UDP-N-acetyl-alpha-D-glucosamine: step 6/6. Functionally, transfers the gamma-phosphate of ATP to the 4'-position of a tetraacyldisaccharide 1-phosphate intermediate (termed DS-1-P) to form tetraacyldisaccharide 1,4'-bis-phosphate (lipid IVA). The polypeptide is Tetraacyldisaccharide 4'-kinase (Aliarcobacter butzleri (strain RM4018) (Arcobacter butzleri)).